Reading from the N-terminus, the 327-residue chain is Aspartate--ammonia ligase (327 aa).

It belongs to the class-II aminoacyl-tRNA synthetase family. AsnA subfamily.

The protein localises to the cytoplasm. The catalysed reaction is L-aspartate + NH4(+) + ATP = L-asparagine + AMP + diphosphate + H(+). It participates in amino-acid biosynthesis; L-asparagine biosynthesis; L-asparagine from L-aspartate (ammonia route): step 1/1. The chain is Aspartate--ammonia ligase from Bacillus cereus (strain G9842).